Here is a 558-residue protein sequence, read N- to C-terminus: MSFAELLERTGGMGRFQITQVALMCFPILLMASHNLLQNFSAAIPDHKCKANDTWYQSNNTDRMGYVRLSAPLDADGQPDRCLEYVEVQWMIAGTNRTWANSSQLATRPCTEGWEYSKDEFNSTIITEWDLVCGHKNRRQLAQSVYMGGVLVGAIILGGLSDRYGRRALLIWSYFQMAVSGLCSAFSPNYLSYCIFRFLTGMALSGIGLNTTALIVEWVPTRVRTITGTLAGFSYTVGQLLLAGLAYAMRDWRWLQLCVSLPFFIFFLYSWWFPESARWLVLSGKTERAVKEMKKVAKLNGKEEEGEKITLESMRSDMIKELACAKSSYTVIDLIRTSTIRRISCALSLVWFSTSFAYYGLAMDLQNFNVSIYLIQVIFGAVDFPAKIFSTTAMIYVGRKFTQLMSLILGGVVILANSFVPHEMQTVRTGMAVFGKGCLAASFSCVFLYTTELYPTVIRQSGLGLCSTMARIGGIVAPLVKILGEYYPFLPLVIYGGAPIISGLCVFFLPETVNKPLPDTIEEVEKRIKAPKKENEMNEIVSLKKKEGMKENPVNDVL.

Residues 1–15 (MSFAELLERTGGMGR) lie on the Cytoplasmic side of the membrane. A helical transmembrane segment spans residues 16 to 36 (FQITQVALMCFPILLMASHNL). Residues 37–140 (LQNFSAAIPD…LVCGHKNRRQ (104 aa)) lie on the Extracellular side of the membrane. The chain crosses the membrane as a helical span at residues 141 to 161 (LAQSVYMGGVLVGAIILGGLS). Over 162–167 (DRYGRR) the chain is Cytoplasmic. The helical transmembrane segment at 168 to 188 (ALLIWSYFQMAVSGLCSAFSP) threads the bilayer. Residues 189–197 (NYLSYCIFR) are Extracellular-facing. A helical membrane pass occupies residues 198–218 (FLTGMALSGIGLNTTALIVEW). The Cytoplasmic portion of the chain corresponds to 219–225 (VPTRVRT). A helical transmembrane segment spans residues 226–246 (ITGTLAGFSYTVGQLLLAGLA). Residues 247–253 (YAMRDWR) are Extracellular-facing. A helical membrane pass occupies residues 254–274 (WLQLCVSLPFFIFFLYSWWFP). Over 275–342 (ESARWLVLSG…DLIRTSTIRR (68 aa)) the chain is Cytoplasmic. A helical membrane pass occupies residues 343-363 (ISCALSLVWFSTSFAYYGLAM). At 364–369 (DLQNFN) the chain is on the extracellular side. A helical membrane pass occupies residues 370 to 390 (VSIYLIQVIFGAVDFPAKIFS). Over 391–400 (TTAMIYVGRK) the chain is Cytoplasmic. Residues 401–421 (FTQLMSLILGGVVILANSFVP) form a helical membrane-spanning segment. Topologically, residues 422-428 (HEMQTVR) are extracellular. The chain crosses the membrane as a helical span at residues 429–449 (TGMAVFGKGCLAASFSCVFLY). The Cytoplasmic portion of the chain corresponds to 450–462 (TTELYPTVIRQSG). Residues 463-483 (LGLCSTMARIGGIVAPLVKIL) form a helical membrane-spanning segment. Residues 484–488 (GEYYP) are Extracellular-facing. A helical transmembrane segment spans residues 489 to 509 (FLPLVIYGGAPIISGLCVFFL). The Cytoplasmic portion of the chain corresponds to 510–558 (PETVNKPLPDTIEEVEKRIKAPKKENEMNEIVSLKKKEGMKENPVNDVL). The segment covering 539-550 (EIVSLKKKEGMK) has biased composition (basic and acidic residues). The interval 539–558 (EIVSLKKKEGMKENPVNDVL) is disordered.

The protein belongs to the major facilitator (TC 2.A.1) superfamily. Organic cation transporter (TC 2.A.1.19) family. In terms of processing, glycosylated. Glycosylation is necessary for proper targeting of the transporter to the plasma membrane.

The protein localises to the cell membrane. It localises to the basolateral cell membrane. The protein resides in the basal cell membrane. In terms of biological role, involved in the renal elimination of endogenous and exogenous organic anions. Mediates the sodium-independent uptake of p-aminohippurate (PAH), 2,3-dimercapto-1-propanesulfonic acid (DMPS), cidofovir, adefovir, 9-(2-phosphonylmethoxyethyl) guanine (PMEG), 9-(2-phosphonylmethoxyethyl) diaminopurine (PMEDAP), ochratoxin (OTA), acyclovir (ACV), 3'-azido-3-'deoxythymidine (AZT), cimetidine (CMD), 2,4-dichloro-phenoxyacetate (2,4-D), hippurate (HA), indoleacetate (IA), indoxyl sulfate (IS) and 3-carboxy-4-methyl-5-propyl-2-furanpropionate (CMPF) and edaravone sulfate. PAH uptake is inhibited by p-chloromercuribenzenesulphonate (PCMBS), diethyl pyrocarbonate (DEPC), indomethacin, sulindac, diclofenac, carprofen, okadaic acid, benzothiazolylcysteine (BTC), S-chlorotrifluoroethylcysteine (CTFC), cysteine S-conjugates S-dichlorovinylcysteine (DCVC), furosemide, steviol, phorbol 12-myristate 13-acetate (PMA), calcium ionophore A23187, benzylpenicillin, bumetamide, losartan, probenecid, phenol red, urate, glutarate and alpha-ketoglutarate. This Xenopus laevis (African clawed frog) protein is Solute carrier family 22 member 6-A (slc22a6-a).